The primary structure comprises 263 residues: MSLPASFDLTAEDAKLLLAANVHLGAKNCQVHNEPYVYKTRPDGVNVINIGKTWEKIVLAARIIAAIPNPEDVVAVSSRTFGQRAVLKFASHTNGSAIAGRFTPGSFTNYITREFKEPRLIIVTDPRTDSQAIKESSYVNIPIIALTDMDSPSEFVDVAIPCNNKGKHSIGLIWYLLSREVLRLRGVLPNRTEAWSVMPDLYFYRDPEEIEQTAEEEAEAAEGAEFEVEEEEVEQEWQEPAEADWNASAPPADWNDAANAEAF.

Residue S2 is modified to N-acetylserine. A compositionally biased stretch (acidic residues) spans 211–242 (EQTAEEEAEAAEGAEFEVEEEEVEQEWQEPAE). The interval 211-263 (EQTAEEEAEAAEGAEFEVEEEEVEQEWQEPAEADWNASAPPADWNDAANAEAF) is disordered. Over residues 246–263 (NASAPPADWNDAANAEAF) the composition is skewed to low complexity.

It belongs to the universal ribosomal protein uS2 family. Component of the small ribosomal subunit. Mature ribosomes consist of a small (40S) and a large (60S) subunit. The 40S subunit contains about 33 different proteins and 1 molecule of RNA (18S). The 60S subunit contains about 49 different proteins and 3 molecules of RNA (25S, 5.8S and 5S). Interacts with RPS21.

The protein localises to the cytoplasm. In terms of biological role, required for the assembly and/or stability of the 40S ribosomal subunit. Required for the processing of the 20S rRNA-precursor to mature 18S rRNA in a late step of the maturation of 40S ribosomal subunits. The protein is Small ribosomal subunit protein uS2 of Komagataella phaffii (strain GS115 / ATCC 20864) (Yeast).